The following is a 987-amino-acid chain: Vacuolar membrane protease (987 aa).

Topologically, residues 1–14 (MATRKARNPLAFMP) are cytoplasmic. A helical membrane pass occupies residues 15–35 (WPVTILTTAMYLALIIPLLVI). The Vacuolar segment spans residues 36 to 384 (HHNVPPAPRT…AFAVFRLHTL (349 aa)). N-linked (GlcNAc...) asparagine glycosylation is found at N51 and N117. Residues H167 and D179 each contribute to the Zn(2+) site. Catalysis depends on E213, which acts as the Proton acceptor. E214, E239, and H312 together coordinate Zn(2+). The helical transmembrane segment at 385–405 (FALSVTLLIVAPLTLLVTSVI) threads the bilayer. The Cytoplasmic portion of the chain corresponds to 406–435 (LSRADKMYLFRSSVYSEINDDYIPLRGLRG). A helical membrane pass occupies residues 436 to 456 (FFRFPFLISIPTGVTVGLAYM). Topologically, residues 457–466 (VTKVNPFIAH) are vacuolar. The helical transmembrane segment at 467 to 487 (SSSYAVWSMMISAWIFLAWFV) threads the bilayer. Residues 488-501 (SRVANSARPSAFHR) lie on the Cytoplasmic side of the membrane. The chain crosses the membrane as a helical span at residues 502–522 (VYTWTWMFVLTWSLMVVCTVY). Over 523–526 (EHEE) the chain is Vacuolar. A helical membrane pass occupies residues 527–547 (GLAGGYFIFFYFAGTFLATWI). At 548 to 649 (SYLELFALPT…WSGVLPRWTW (102 aa)) the chain is on the cytoplasmic side. The segment at 572-600 (STQGSRLAASGDEHQDDAAEEDPTESTSL) is disordered. A helical transmembrane segment spans residues 650–670 (LLQLLITAPVILMLIVPLALL). Topologically, residues 671–686 (TTSALSQTGQDGSPQL) are vacuolar. Residues 687-707 (LIYLFISCLTALLFAPMLPFI) form a helical membrane-spanning segment. The Cytoplasmic segment spans residues 708–715 (HRYTYHLP). A helical transmembrane segment spans residues 716 to 736 (IFLLFVFIGTMIYNLVAFPFA). Residues 737 to 987 (DSNRLKLFFL…KRSSLGALGS (251 aa)) are Vacuolar-facing. N-linked (GlcNAc...) asparagine glycans are attached at residues N781 and N871.

Belongs to the peptidase M28 family. Zn(2+) is required as a cofactor.

It localises to the vacuole membrane. In terms of biological role, may be involved in vacuolar sorting and osmoregulation. This chain is Vacuolar membrane protease, found in Penicillium rubens (strain ATCC 28089 / DSM 1075 / NRRL 1951 / Wisconsin 54-1255) (Penicillium chrysogenum).